The primary structure comprises 471 residues: Ribonuclease 3 (471 aa).

Residues 1 to 10 (MGSKVAGKKK) are compositionally biased toward basic residues. Disordered stretches follow at residues 1–29 (MGSK…RENI) and 168–189 (NLNE…PTKA). Positions 20-29 (ENGSQQRENI) are enriched in polar residues. Acidic residues predominate over residues 172 to 184 (KEDEEEDEGEDSY). The RNase III domain maps to 227 to 331 (LSGSEMINAH…YIGGLMEDDP (105 aa)). In terms of domain architecture, DRBM spans 369–437 (NAKRQLYSLI…AENALRDKKM (69 aa)). The tract at residues 451 to 471 (SESVLKDPSQKNKKRKFSDTS) is disordered. Over residues 461 to 471 (KNKKRKFSDTS) the composition is skewed to basic residues.

The catalysed reaction is Endonucleolytic cleavage to 5'-phosphomonoester.. Its function is as follows. DsRNA-specific nuclease that cleaves eukaryotic pre-ribosomal RNA at the U3 snoRNP-dependent A0 site in the 5'-external transcribed spacer (ETS) and in the 3'-ETS. In vitro, cleaves synthetic 5'-ETS RNA A0 site in the absence of snoRNA or other factors. Has an essential growth function in addition to pre-rRNA processing. The sequence is that of Ribonuclease 3 (RNT1) from Saccharomyces cerevisiae (strain ATCC 204508 / S288c) (Baker's yeast).